We begin with the raw amino-acid sequence, 63 residues long: Sec-independent protein translocase protein TatA (63 aa).

Residues Met1–Gly21 form a helical membrane-spanning segment. The interval Met43 to Lys63 is disordered. Basic and acidic residues predominate over residues Lys53–Lys63.

This sequence belongs to the TatA/E family. The Tat system comprises two distinct complexes: a TatABC complex, containing multiple copies of TatA, TatB and TatC subunits, and a separate TatA complex, containing only TatA subunits. Substrates initially bind to the TatABC complex, which probably triggers association of the separate TatA complex to form the active translocon.

Its subcellular location is the cell inner membrane. Functionally, part of the twin-arginine translocation (Tat) system that transports large folded proteins containing a characteristic twin-arginine motif in their signal peptide across membranes. TatA could form the protein-conducting channel of the Tat system. The polypeptide is Sec-independent protein translocase protein TatA (Rhizobium etli (strain ATCC 51251 / DSM 11541 / JCM 21823 / NBRC 15573 / CFN 42)).